The sequence spans 148 residues: Large ribosomal subunit protein bL9 (148 aa).

The protein belongs to the bacterial ribosomal protein bL9 family.

In terms of biological role, binds to the 23S rRNA. This is Large ribosomal subunit protein bL9 from Listeria innocua serovar 6a (strain ATCC BAA-680 / CLIP 11262).